Here is a 529-residue protein sequence, read N- to C-terminus: F-box/LRR-repeat protein At5g63520 (529 aa).

Positions 1 to 22 (MAEVSLTKKEMTTKGKSENSKK) are disordered. Residues 31–78 (VPIAAMNEDLLHNILLRLPAKSFAFASCVNRFWSSVCNRILSRPKMIS) form the F-box domain. 2 LRR repeats span residues 265–288 (GNEP…IFAR) and 418–441 (QVYL…LRNL).

This is F-box/LRR-repeat protein At5g63520 from Arabidopsis thaliana (Mouse-ear cress).